Reading from the N-terminus, the 380-residue chain is Nucleoporin Nup43 (380 aa).

N-acetylmethionine is present on M1. WD repeat units follow at residues 8 to 57 (FVSQ…NLDS), 72 to 110 (RHHGDVMDLQFFDQERIVAASSTGCVTVFLHHPNNQTLS), 127 to 166 (PSYSSAPCTGVVCNNPEIVTVGEDGRINLFRADHKEAVRT), 170 to 208 (ADSSTLHAVTFLRTPEILTVNSIGQLKIWDFRQQGNEPS), 215 to 255 (GDRV…MPVS), and 259 to 299 (AHEA…PEKS).

Component of the Nup107-160 subcomplex of the nuclear pore complex (NPC). The Nup107-160 subcomplex includes NUP160, NUP133, NUP107, NUP98, NUP85, NUP43, NUP37, SEH1 and SEC13.

The protein resides in the chromosome. Its subcellular location is the centromere. The protein localises to the kinetochore. It is found in the nucleus. It localises to the nuclear pore complex. Functionally, component of the Nup107-160 subcomplex of the nuclear pore complex (NPC). The Nup107-160 subcomplex is required for the assembly of a functional NPC. The Nup107-160 subcomplex is also required for normal kinetochore microtubule attachment, mitotic progression and chromosome segregation. The polypeptide is Nucleoporin Nup43 (NUP43) (Homo sapiens (Human)).